A 239-amino-acid polypeptide reads, in one-letter code: Octanoyl-[acyl-carrier-protein]:protein N-octanoyltransferase LIPT2, mitochondrial (239 aa).

The N-terminal 18 residues, 1 to 18 (MSVPVLRVRRLGLVGYAE), are a transit peptide targeting the mitochondrion. A BPL/LPL catalytic domain is found at 37–217 (GSPGGALLLC…AFEEEFQCQL (181 aa)). Substrate contacts are provided by residues 81–88 (RGGLITFH), 147–149 (AIG), and 160–162 (GLA). The Acyl-thioester intermediate role is filled by C178. The disordered stretch occupies residues 220-239 (EQNPEQNPVQNRPDRDAGPL).

It belongs to the LipB family.

It localises to the mitochondrion. The catalysed reaction is octanoyl-[ACP] + L-lysyl-[protein] = N(6)-octanoyl-L-lysyl-[protein] + holo-[ACP] + H(+). Its pathway is protein modification; protein lipoylation via endogenous pathway; protein N(6)-(lipoyl)lysine from octanoyl-[acyl-carrier-protein]: step 1/2. Functionally, catalyzes the transfer of endogenously produced octanoic acid from octanoyl-acyl-carrier-protein (octanoyl-ACP) onto the lipoyl domains of lipoate-dependent enzymes such as the protein H of the glycine cleavage system (GCSH). Lipoyl-ACP can also act as a substrate although octanoyl-ACP is likely to be the physiological substrate. This chain is Octanoyl-[acyl-carrier-protein]:protein N-octanoyltransferase LIPT2, mitochondrial (lipt2), found in Xenopus tropicalis (Western clawed frog).